Reading from the N-terminus, the 278-residue chain is Cytoplasmic envelopment protein 1 (278 aa).

This sequence belongs to the herpesviridae cytoplasmic envelopment protein 1 family. As to quaternary structure, interacts with BSRF1 tegument protein; the BBRF2-BSRF1 complexes oligomerize and might play a role in tethering the viral nucleocapsids to the host Golgi membrane during secondary envelopment.

The protein resides in the virion. It is found in the virion tegument. Its subcellular location is the host cytoplasm. It localises to the host Golgi apparatus. Its function is as follows. Plays a critical role in cytoplasmic virus egress. Participates in the final step of tegumentation and envelope acquisition within the host cytoplasm. This Homo sapiens (Human) protein is Cytoplasmic envelopment protein 1.